The chain runs to 248 residues: 14-3-3-like protein G-BOX factor 14 lambda (248 aa).

Residues Ser70, Ser112, and Ser193 each carry the phosphoserine; by CRPK1 modification. Thr214 is subject to Phosphothreonine; by CRPK1.

It belongs to the 14-3-3 family. Interacts with SERK1 in the cell membrane. Component of the SERK1 signaling complex, composed of KAPP, CDC48A, GRF6 or GRF7, SERK1, SERK2, SERK3/BAK1 and BRI1. Interacts with TPK1. Interacts with ADF1. Binds to CRPK1 at the plasma membrane. Interacts with DREB1A and DREB1B in the nucleus when activated by CRPK1-mediated phosphorylation upon freezing. Interacts with CINV1. Binds to the N-terminal region of B1L. Transphosphorylated by SERK1. Post-translationally, phosphorylated by CRPK1 in response to cold.

The protein resides in the nucleus. It localises to the cell membrane. The protein localises to the cytoplasm. Is associated with a DNA binding complex that binds to the G box, a well-characterized cis-acting DNA regulatory element found in plant genes. Specific negative regulator of slow-vacuolar (SV) ion channel. Mediates F-actin dynamics possibly through inhibiting ADF1 phosphorylation. Negative regulator of freezing tolerance that modulates cold-responsive C-repeat-binding factors (CBF) DREB1A and DREB1B proteins stability by facilitating their ubiquitin-mediated degradation when activated by CRPK1-mediated phosphorylation in freezing conditions; this processus is counteracted by B1L. The protein is 14-3-3-like protein G-BOX factor 14 lambda of Arabidopsis thaliana (Mouse-ear cress).